A 172-amino-acid polypeptide reads, in one-letter code: Large ribosomal subunit protein uL10 (172 aa).

Belongs to the universal ribosomal protein uL10 family. As to quaternary structure, part of the ribosomal stalk of the 50S ribosomal subunit. The N-terminus interacts with L11 and the large rRNA to form the base of the stalk. The C-terminus forms an elongated spine to which L12 dimers bind in a sequential fashion forming a multimeric L10(L12)X complex.

In terms of biological role, forms part of the ribosomal stalk, playing a central role in the interaction of the ribosome with GTP-bound translation factors. This Rhodopseudomonas palustris (strain BisB5) protein is Large ribosomal subunit protein uL10.